The following is a 513-amino-acid chain: Voltage-gated potassium channel regulatory subunit KCNG1 (513 aa).

Residues 1–224 lie on the Cytoplasmic side of the membrane; the sequence is MTLLPGDNSD…DMVERPHSGL (224 aa). The tract at residues 184–204 is disordered; the sequence is EEDDALDSEGRDSEGPAEGEG. Residues 191–204 show a composition bias toward basic and acidic residues; it reads SEGRDSEGPAEGEG. The helical transmembrane segment at 225 to 246 threads the bilayer; that stretch reads PGKVFACLSVLFVTVTAVNLSV. The Extracellular portion of the chain corresponds to 247 to 267; the sequence is STLPSLREEEEQGHCSQMCHN. The chain crosses the membrane as a helical span at residues 268 to 289; it reads VFIVESVCVGWFSLEFLLRLIQ. Over 290 to 300 the chain is Cytoplasmic; that stretch reads APSKFAFLRSP. Residues 301–321 traverse the membrane as a helical segment; that stretch reads LTLIDLVAILPYYITLLVDGA. The Extracellular segment spans residues 322 to 338; it reads AAGRRKPGAGNSYLDKV. The helical; Voltage-sensor transmembrane segment at 339 to 359 threads the bilayer; the sequence is GLVLRVLRALRILYVMRLARH. Over 360–374 the chain is Cytoplasmic; sequence SLGLQTLGLTARRCT. A helical transmembrane segment spans residues 375–396; the sequence is REFGLLLLFLCVAIALFAPLLY. Residues 397–411 are Extracellular-facing; the sequence is VIENEMADSPEFTSI. The segment at residues 412 to 423 is an intramembrane region (helical); the sequence is PACYWWAVITMT. Residues 424 to 429 carry the Selectivity filter motif; it reads TVGYGD. Residues 424–431 lie within the membrane without spanning it; sequence TVGYGDMV. At 432–438 the chain is on the extracellular side; that stretch reads PRSTPGQ. The helical transmembrane segment at 439–467 threads the bilayer; sequence VVALSSILSGILLMAFPVTSIFHTFSRSY. Residues 468-513 are Cytoplasmic-facing; sequence LELKQEQERVMFRRAQFLIKTKSQLSVSQDSDILFGSASSDTRDNN.

The protein belongs to the potassium channel family. G (TC 1.A.1.2) subfamily. Kv6.1/KCNG1 sub-subfamily. In terms of assembly, heterotetramer with KCNB1. Heterotetramer with KCNB2. In terms of tissue distribution, expressed in brain and placenta, and at much lower levels in kidney and pancreas.

It localises to the cell membrane. Functionally, regulatory alpha-subunit of the voltage-gated potassium (Kv) channel which, when coassembled with KCNB1 or KCNB2, can modulate their expression and their gating kinetics by acting on deactivation upon repolarization and inactivation during maintained depolarization. Potassium channel subunit that does not form functional channels by itself. The chain is Voltage-gated potassium channel regulatory subunit KCNG1 from Homo sapiens (Human).